The following is a 248-amino-acid chain: Exosome complex component Rrp41 (248 aa).

This sequence belongs to the RNase PH family. Rrp41 subfamily. Component of the archaeal exosome complex. Forms a hexameric ring-like arrangement composed of 3 Rrp41-Rrp42 heterodimers. The hexameric ring associates with a trimer of Rrp4 and/or Csl4 subunits.

The protein resides in the cytoplasm. Its function is as follows. Catalytic component of the exosome, which is a complex involved in RNA degradation. Has 3'-&gt;5' exoribonuclease activity. Can also synthesize heteromeric RNA-tails. Binds RNA. This chain is Exosome complex component Rrp41, found in Saccharolobus solfataricus (strain ATCC 35092 / DSM 1617 / JCM 11322 / P2) (Sulfolobus solfataricus).